The chain runs to 245 residues: Ribosomal RNA small subunit methyltransferase J (245 aa).

S-adenosyl-L-methionine contacts are provided by residues 94–95 (RD), 110–111 (ER), and Asp164.

Belongs to the methyltransferase superfamily. RsmJ family.

The protein resides in the cytoplasm. The catalysed reaction is guanosine(1516) in 16S rRNA + S-adenosyl-L-methionine = N(2)-methylguanosine(1516) in 16S rRNA + S-adenosyl-L-homocysteine + H(+). In terms of biological role, specifically methylates the guanosine in position 1516 of 16S rRNA. The protein is Ribosomal RNA small subunit methyltransferase J of Dechloromonas aromatica (strain RCB).